The following is a 216-amino-acid chain: Protein-L-isoaspartate O-methyltransferase (216 aa).

The active site involves serine 66.

The protein belongs to the methyltransferase superfamily. L-isoaspartyl/D-aspartyl protein methyltransferase family.

It localises to the cytoplasm. It catalyses the reaction [protein]-L-isoaspartate + S-adenosyl-L-methionine = [protein]-L-isoaspartate alpha-methyl ester + S-adenosyl-L-homocysteine. Catalyzes the methyl esterification of L-isoaspartyl residues in peptides and proteins that result from spontaneous decomposition of normal L-aspartyl and L-asparaginyl residues. It plays a role in the repair and/or degradation of damaged proteins. The polypeptide is Protein-L-isoaspartate O-methyltransferase (Dechloromonas aromatica (strain RCB)).